We begin with the raw amino-acid sequence, 243 residues long: Adenosine 5'-phosphosulfate reductase (243 aa).

Residues Cys126, Cys127, Cys209, and Cys212 each contribute to the [4Fe-4S] cluster site. Cys235 serves as the catalytic Nucleophile; cysteine thiosulfonate intermediate.

The protein belongs to the PAPS reductase family. CysH subfamily. The cofactor is [4Fe-4S] cluster.

The protein resides in the cytoplasm. The catalysed reaction is [thioredoxin]-disulfide + sulfite + AMP + 2 H(+) = adenosine 5'-phosphosulfate + [thioredoxin]-dithiol. Its pathway is sulfur metabolism; hydrogen sulfide biosynthesis; sulfite from sulfate. In terms of biological role, catalyzes the formation of sulfite from adenosine 5'-phosphosulfate (APS) using thioredoxin as an electron donor. This Staphylococcus epidermidis (strain ATCC 12228 / FDA PCI 1200) protein is Adenosine 5'-phosphosulfate reductase.